The chain runs to 205 residues: Superoxide dismutase [Mn] (205 aa).

The Mn(2+) site is built by histidine 30, histidine 78, aspartate 166, and histidine 170.

It belongs to the iron/manganese superoxide dismutase family. In terms of assembly, homodimer. Requires Mn(2+) as cofactor.

The catalysed reaction is 2 superoxide + 2 H(+) = H2O2 + O2. In terms of biological role, destroys superoxide anion radicals which are normally produced within the cells and which are toxic to biological systems. The sequence is that of Superoxide dismutase [Mn] (sodA) from Chlamydia muridarum (strain MoPn / Nigg).